The primary structure comprises 422 residues: Probable metallocarboxypeptidase A (422 aa).

A signal peptide spans 1–17 (MRSVLSLALLAVNVVTA). A propeptide spans 18–112 (AVVAPFDYSG…FEAYSAGYAP (95 aa)) (activation peptide). Residues 119 to 419 (SYHSYQDHLS…AGTVAMLKAV (301 aa)) form the Peptidase M14 domain. Positions 179 and 182 each coordinate Zn(2+). Residues 179–182 (HARE), arginine 237, and 254–255 (NR) contribute to the substrate site. Cysteine 248 and cysteine 271 are disulfide-bonded. Residue histidine 309 participates in Zn(2+) binding. 310–311 (SY) contributes to the substrate binding site. The active-site Proton donor/acceptor is glutamate 385.

It belongs to the peptidase M14 family. Requires Zn(2+) as cofactor.

It is found in the secreted. Its function is as follows. Extracellular metalloprotease that contributes to pathogenicity. The chain is Probable metallocarboxypeptidase A (MCPA) from Trichophyton verrucosum (strain HKI 0517).